A 339-amino-acid chain; its full sequence is DNA-directed RNA polymerase subunit alpha (339 aa).

An alpha N-terminal domain (alpha-NTD) region spans residues 1–233 (MVREEVAGST…DLFLPFLHAE (233 aa)). Residues 264 to 339 (KKGIPLNSIF…IDLLKNKLSF (76 aa)) are alpha C-terminal domain (alpha-CTD).

Belongs to the RNA polymerase alpha chain family. In plastids the minimal PEP RNA polymerase catalytic core is composed of four subunits: alpha, beta, beta', and beta''. When a (nuclear-encoded) sigma factor is associated with the core the holoenzyme is formed, which can initiate transcription.

Its subcellular location is the plastid. It localises to the chloroplast. It catalyses the reaction RNA(n) + a ribonucleoside 5'-triphosphate = RNA(n+1) + diphosphate. Its function is as follows. DNA-dependent RNA polymerase catalyzes the transcription of DNA into RNA using the four ribonucleoside triphosphates as substrates. The polypeptide is DNA-directed RNA polymerase subunit alpha (Aegilops tauschii (Tausch's goatgrass)).